Here is a 145-residue protein sequence, read N- to C-terminus: D-aminoacyl-tRNA deacylase (145 aa).

The Gly-cisPro motif, important for rejection of L-amino acids motif lies at Gly137–Pro138.

This sequence belongs to the DTD family. As to quaternary structure, homodimer.

It localises to the cytoplasm. The catalysed reaction is glycyl-tRNA(Ala) + H2O = tRNA(Ala) + glycine + H(+). It carries out the reaction a D-aminoacyl-tRNA + H2O = a tRNA + a D-alpha-amino acid + H(+). Its function is as follows. An aminoacyl-tRNA editing enzyme that deacylates mischarged D-aminoacyl-tRNAs. Also deacylates mischarged glycyl-tRNA(Ala), protecting cells against glycine mischarging by AlaRS. Acts via tRNA-based rather than protein-based catalysis; rejects L-amino acids rather than detecting D-amino acids in the active site. By recycling D-aminoacyl-tRNA to D-amino acids and free tRNA molecules, this enzyme counteracts the toxicity associated with the formation of D-aminoacyl-tRNA entities in vivo and helps enforce protein L-homochirality. The chain is D-aminoacyl-tRNA deacylase from Shewanella sediminis (strain HAW-EB3).